Consider the following 340-residue polypeptide: Outer membrane protein B (340 aa).

The signal sequence occupies residues 1-26 (MSSKLVNSLRLTFLSFLGIVSTSLDA).

The protein belongs to the chlamydial OMP family.

The protein localises to the cell outer membrane. The protein is Outer membrane protein B (ompB) of Chlamydia muridarum (strain MoPn / Nigg).